Reading from the N-terminus, the 399-residue chain is UDP-N-acetylglucosamine--N-acetylmuramyl-(pentapeptide) pyrophosphoryl-undecaprenol N-acetylglucosamine transferase (399 aa).

The interval 1–31 (MTSRFGHSQHPRRGRSARARAGRREGVQSNF) is disordered. The span at 7 to 21 (HSQHPRRGRSARARA) shows a compositional bias: basic residues. Residues 58–60 (TGG), asparagine 170, arginine 206, serine 234, isoleucine 288, and glutamine 333 each bind UDP-N-acetyl-alpha-D-glucosamine.

This sequence belongs to the glycosyltransferase 28 family. MurG subfamily.

The protein resides in the cell inner membrane. The catalysed reaction is di-trans,octa-cis-undecaprenyl diphospho-N-acetyl-alpha-D-muramoyl-L-alanyl-D-glutamyl-meso-2,6-diaminopimeloyl-D-alanyl-D-alanine + UDP-N-acetyl-alpha-D-glucosamine = di-trans,octa-cis-undecaprenyl diphospho-[N-acetyl-alpha-D-glucosaminyl-(1-&gt;4)]-N-acetyl-alpha-D-muramoyl-L-alanyl-D-glutamyl-meso-2,6-diaminopimeloyl-D-alanyl-D-alanine + UDP + H(+). The protein operates within cell wall biogenesis; peptidoglycan biosynthesis. Cell wall formation. Catalyzes the transfer of a GlcNAc subunit on undecaprenyl-pyrophosphoryl-MurNAc-pentapeptide (lipid intermediate I) to form undecaprenyl-pyrophosphoryl-MurNAc-(pentapeptide)GlcNAc (lipid intermediate II). In Acidovorax sp. (strain JS42), this protein is UDP-N-acetylglucosamine--N-acetylmuramyl-(pentapeptide) pyrophosphoryl-undecaprenol N-acetylglucosamine transferase.